The sequence spans 209 residues: Kynurenine formamidase (209 aa).

Trp19 is a binding site for substrate. Residues His49, His53, and Asp55 each coordinate Zn(2+). Catalysis depends on His59, which acts as the Proton donor/acceptor. Positions 160 and 172 each coordinate Zn(2+).

This sequence belongs to the Cyclase 1 superfamily. KynB family. Homodimer. It depends on Zn(2+) as a cofactor.

The enzyme catalyses N-formyl-L-kynurenine + H2O = L-kynurenine + formate + H(+). The protein operates within amino-acid degradation; L-tryptophan degradation via kynurenine pathway; L-kynurenine from L-tryptophan: step 2/2. In terms of biological role, catalyzes the hydrolysis of N-formyl-L-kynurenine to L-kynurenine, the second step in the kynurenine pathway of tryptophan degradation. The protein is Kynurenine formamidase of Ralstonia nicotianae (strain ATCC BAA-1114 / GMI1000) (Ralstonia solanacearum).